A 671-amino-acid chain; its full sequence is APC membrane recruitment protein 2 (671 aa).

Disordered regions lie at residues 1 to 24 (METSRSRGGGGAVSERGGAGASVG), 76 to 358 (SGGT…SDPS), 391 to 414 (EAGPSCDKHVPGPGKPALSKKNPG), and 444 to 598 (SQTE…PLRT). Gly residues-rich tracts occupy residues 7–21 (RGGGGAVSERGGAGA) and 126–137 (GGDSGGGGGGRP). Serine 162 carries the phosphoserine modification. Positions 171 to 182 (GRSENGKGEPVD) are enriched in basic and acidic residues. Serine 229 and serine 233 each carry phosphoserine. Composition is skewed to basic and acidic residues over residues 236-260 (CVKEETPRAAREPEEPSQDAPRDPA), 276-286 (APARSCREAEG), and 295-307 (ARGEDAAGHRRAE). Residues 342–353 (APAAPDPASVDP) are compositionally biased toward low complexity. Residues serine 355 and serine 358 each carry the phosphoserine modification. Residues 447–458 (EEQGPEPQEGAA) are compositionally biased toward low complexity. Basic and acidic residues-rich tracts occupy residues 472 to 487 (TPKDTRCVEAAKDASS) and 498 to 514 (IEPHPKEEPKHPEKEQQ).

Belongs to the Amer family. In terms of assembly, interacts with APC.

Its subcellular location is the cell membrane. Functionally, negative regulator of the canonical Wnt signaling pathway involved in neuroectodermal patterning. Acts by specifically binding phosphatidylinositol 4,5-bisphosphate (PtdIns(4,5)P2), translocating to the cell membrane and interacting with key regulators of the canonical Wnt signaling pathway, such as components of the beta-catenin destruction complex. This is APC membrane recruitment protein 2 (AMER2) from Homo sapiens (Human).